A 408-amino-acid polypeptide reads, in one-letter code: Dual-specificity RNA methyltransferase RlmN (408 aa).

The active-site Proton acceptor is the Glu120. Residues 126-375 form the Radical SAM core domain; sequence EEGRGTLCIS…IRTPRGRDIL (250 aa). An intrachain disulfide couples Cys133 to Cys378. Positions 140, 144, and 147 each coordinate [4Fe-4S] cluster. Residues 204–205, Ser236, 258–260, and Asn335 each bind S-adenosyl-L-methionine; these read GE and SLH. Cys378 serves as the catalytic S-methylcysteine intermediate.

It belongs to the radical SAM superfamily. RlmN family. [4Fe-4S] cluster serves as cofactor.

The protein localises to the cytoplasm. It carries out the reaction adenosine(2503) in 23S rRNA + 2 reduced [2Fe-2S]-[ferredoxin] + 2 S-adenosyl-L-methionine = 2-methyladenosine(2503) in 23S rRNA + 5'-deoxyadenosine + L-methionine + 2 oxidized [2Fe-2S]-[ferredoxin] + S-adenosyl-L-homocysteine. The catalysed reaction is adenosine(37) in tRNA + 2 reduced [2Fe-2S]-[ferredoxin] + 2 S-adenosyl-L-methionine = 2-methyladenosine(37) in tRNA + 5'-deoxyadenosine + L-methionine + 2 oxidized [2Fe-2S]-[ferredoxin] + S-adenosyl-L-homocysteine. Its function is as follows. Specifically methylates position 2 of adenine 2503 in 23S rRNA and position 2 of adenine 37 in tRNAs. m2A2503 modification seems to play a crucial role in the proofreading step occurring at the peptidyl transferase center and thus would serve to optimize ribosomal fidelity. This chain is Dual-specificity RNA methyltransferase RlmN, found in Rhizobium johnstonii (strain DSM 114642 / LMG 32736 / 3841) (Rhizobium leguminosarum bv. viciae).